The sequence spans 277 residues: Large ribosomal subunit protein uL2 (277 aa).

Disordered stretches follow at residues 1–55 and 217–277; these read MGIR…RHQG and KRPS…KKKR. Over residues 37–55 the composition is skewed to basic residues; that stretch reads LHSKGGRNGHGRITARHQG.

The protein belongs to the universal ribosomal protein uL2 family. As to quaternary structure, part of the 50S ribosomal subunit. Forms a bridge to the 30S subunit in the 70S ribosome.

Functionally, one of the primary rRNA binding proteins. Required for association of the 30S and 50S subunits to form the 70S ribosome, for tRNA binding and peptide bond formation. It has been suggested to have peptidyltransferase activity; this is somewhat controversial. Makes several contacts with the 16S rRNA in the 70S ribosome. The sequence is that of Large ribosomal subunit protein uL2 from Thermobifida fusca (strain YX).